A 1354-amino-acid polypeptide reads, in one-letter code: Eukaryotic translation initiation factor 3 subunit A (1354 aa).

K68 carries the post-translational modification N6-acetyllysine. Residues 82-120 (NIKSLEDVVRAYLKLAEEKTEAAKEESQQMVLDIEDLDN) are a coiled coil. The 184-residue stretch at 315 to 498 (MQRMSTRVLL…RTLSFGSDLN (184 aa)) folds into the PCI domain. 2 positions are modified to phosphoserine: S492 and S584. Residues 664 to 835 (LDPDFIMAKQ…REERERAERA (172 aa)) are interaction with EIF3B. 3 disordered regions span residues 809–844 (EKEE…LREY), 866–1249 (EERE…RDRD), and 1262–1354 (DLRD…TVRR). Composition is skewed to basic and acidic residues over residues 866–1136 (EERE…DDAR), 1148–1249 (GWRE…RDRD), 1262–1302 (DLRD…DPPR), and 1310–1343 (SRER…TKNE). Residue S895 is modified to Phosphoserine. The 1; truncated repeat unit spans residues 924 to 931 (DDERPHRR). The tract at residues 924 to 1143 (DDERPHRRDE…DARPGPWRPF (220 aa)) is 22 X 10 AA approximate tandem repeats of [DA]-[DE]-[ED]-R-[PLIGFSV]-[RPS]-[RW]-[RL]-[GNIHT]-[DGLPTAM]. Residues 932 to 941 (DEDRLRRLGG) form repeat 2. The stretch at 942 to 951 (DDEERESSLR) is one 3; approximate repeat. S949 is modified (phosphoserine). 18 consecutive repeat copies span residues 953–962 (DDDRIPRRGL), 963–972 (DDDRGPRRGP), 973–982 (DEDRFSRRGT), 983–992 (DDDRPSWRNA), 993–1002 (DDDRPPRRIG), 1003–1012 (DDDRGSWRHT), 1013–1022 (DDDRPPRRGL), 1023–1032 (DDDRPPRRGL), 1033–1042 (DDERGSWRTA), 1043–1052 (EEDRGPRRGM), 1053–1062 (DDDRGPRRGG), 1064–1073 (DDERSSWRNA), 1074–1083 (DDDRGPRRGM), 1084–1093 (DDDRGPRRGL), 1094–1103 (DDDRGPWRNA), 1104–1113 (AEDRISRRGA), 1114–1123 (DDDRGPWRNM), and 1124–1133 (DDDRVPRRGD). S1038 is modified (phosphoserine). A 22; approximate repeat occupies 1134–1143 (DARPGPWRPF). 2 positions are modified to phosphoserine: S1159 and S1233. Phosphoserine occurs at positions 1310 and 1336.

It belongs to the eIF-3 subunit A family. Component of the eukaryotic translation initiation factor 3 (eIF-3) complex, which is composed of 13 subunits: EIF3A, EIF3B, EIF3C, EIF3D, EIF3E, EIF3F, EIF3G, EIF3H, EIF3I, EIF3J, EIF3K, EIF3L and EIF3M. The eIF-3 complex appears to include 3 stable modules: module A is composed of EIF3A, EIF3B, EIF3G and EIF3I; module B is composed of EIF3F, EIF3H, and EIF3M; and module C is composed of EIF3C, EIF3D, EIF3E, EIF3L and EIF3K. EIF3C of module C binds EIF3B of module A and EIF3H of module B, thereby linking the three modules. EIF3J is a labile subunit that binds to the eIF-3 complex via EIF3B. The eIF-3 complex interacts with RPS6KB1 under conditions of nutrient depletion. Mitogenic stimulation leads to binding and activation of a complex composed of MTOR and RPTOR, leading to phosphorylation and release of RPS6KB1 and binding of EIF4B to eIF-3. Interacts with EIF4G1. Also interacts with KRT7 and PIWIL2. Post-translationally, phosphorylated. Phosphorylation is enhanced upon serum stimulation.

Its subcellular location is the cytoplasm. Functionally, RNA-binding component of the eukaryotic translation initiation factor 3 (eIF-3) complex, which is required for several steps in the initiation of protein synthesis. The eIF-3 complex associates with the 40S ribosome and facilitates the recruitment of eIF-1, eIF-1A, eIF-2:GTP:methionyl-tRNAi and eIF-5 to form the 43S pre-initiation complex (43S PIC). The eIF-3 complex stimulates mRNA recruitment to the 43S PIC and scanning of the mRNA for AUG recognition. The eIF-3 complex is also required for disassembly and recycling of post-termination ribosomal complexes and subsequently prevents premature joining of the 40S and 60S ribosomal subunits prior to initiation. The eIF-3 complex specifically targets and initiates translation of a subset of mRNAs involved in cell proliferation, including cell cycling, differentiation and apoptosis, and uses different modes of RNA stem-loop binding to exert either translational activation or repression. The polypeptide is Eukaryotic translation initiation factor 3 subunit A (Eif3a) (Rattus norvegicus (Rat)).